Here is a 420-residue protein sequence, read N- to C-terminus: PHO85 cyclin-6 (420 aa).

Disordered regions lie at residues Met-1–Phe-82, Gln-134–Asn-155, and Val-268–Arg-321. The segment covering Ser-7 to Ser-22 has biased composition (low complexity). Ser-61 is modified (phosphoserine). Positions Gln-134–Thr-143 are enriched in polar residues. The span at Ala-277–Asp-296 shows a compositional bias: basic and acidic residues. A phosphoserine mark is found at Ser-281 and Ser-312. Positions Asn-307–Asn-316 are enriched in acidic residues. Thr-317 is subject to Phosphothreonine.

Belongs to the cyclin family. PHO80 subfamily. Forms a cyclin-CDK complex with PHO85. Interacts with the substrate protein YJL084C. Interacts with elongin-C, which stabilizes PCL6. Interacts with the CDK inhibitor (CKI) PHO81.

The protein resides in the cytoplasm. It is found in the nucleus. In terms of biological role, cyclin partner of the cyclin-dependent kinase (CDK) PHO85. Together with cyclin PCL7, controls glycogen phosphorylase and glycogen synthase activities in response to nutrient availablility. The PCL6-PHO85 cyclin-CDK holoenzyme has GLC8 kinase activity and phosphorylates and inactivates the phosphatase PP1-2 inhibitor GLC8, causing activation of PP1-2, which then dephosphorylates and activates glycogen phosphorylase. PCL6-PHO85 also phosphorylates YJL084C. This chain is PHO85 cyclin-6 (PCL6), found in Saccharomyces cerevisiae (strain ATCC 204508 / S288c) (Baker's yeast).